Reading from the N-terminus, the 360-residue chain is D-alanine--D-alanine ligase (360 aa).

An ATP-grasp domain is found at 149–353 (KKLMAAEGLP…YEELLDVLVQ (205 aa)). Residue 176 to 231 (KNLLGLPVFVKPARGGSSIGISRVTAWEDFNKAVGLARAHDEKVIVESEIVGSEVE) participates in ATP binding. Mg(2+) is bound by residues D308, E320, and N322.

It belongs to the D-alanine--D-alanine ligase family. Requires Mg(2+) as cofactor. It depends on Mn(2+) as a cofactor.

It localises to the cytoplasm. The catalysed reaction is 2 D-alanine + ATP = D-alanyl-D-alanine + ADP + phosphate + H(+). It participates in cell wall biogenesis; peptidoglycan biosynthesis. In terms of biological role, cell wall formation. This chain is D-alanine--D-alanine ligase, found in Corynebacterium glutamicum (strain ATCC 13032 / DSM 20300 / JCM 1318 / BCRC 11384 / CCUG 27702 / LMG 3730 / NBRC 12168 / NCIMB 10025 / NRRL B-2784 / 534).